The sequence spans 354 residues: Guanine nucleotide-binding protein G(i) subunit alpha-3 (354 aa).

A lipid anchor (N-myristoyl glycine) is attached at glycine 2. Residue cysteine 3 is the site of S-palmitoyl cysteine attachment. Residues 32–354 (KEVKLLLLGA…KNNLKECGLY (323 aa)) form the G-alpha domain. The segment at 35–48 (KLLLLGAGESGKST) is G1 motif. GTP contacts are provided by glycine 42, glutamate 43, serine 44, glycine 45, lysine 46, serine 47, threonine 48, aspartate 150, serine 151, leucine 175, arginine 176, threonine 177, arginine 178, valine 179, lysine 180, threonine 181, valine 201, and glycine 203. The GDP site is built by glutamate 43, serine 44, glycine 45, lysine 46, serine 47, and threonine 48. Serine 47 contributes to the Mg(2+) binding site. Positions 151, 175, 176, 177, and 178 each coordinate GDP. Positions 173–181 (DVLRTRVKT) are G2 motif. Arginine 178 is modified (ADP-ribosylarginine; by cholera toxin). Mg(2+) is bound at residue threonine 181. Residues 196–205 (FKMFDVGGQR) form a G3 motif region. Residue glutamine 204 is modified to Deamidated glutamine; by Photorhabdus PAU_02230. Residues 265 to 272 (ILFLNKKD) are G4 motif. Residues asparagine 269, lysine 270, aspartate 272, leucine 273, cysteine 325, alanine 326, and threonine 327 each coordinate GTP. Positions 269, 270, and 272 each coordinate GDP. The G5 motif stretch occupies residues 324–329 (TCATDT). GDP contacts are provided by cysteine 325 and alanine 326. Cysteine 351 carries the post-translational modification ADP-ribosylcysteine; by pertussis toxin.

It belongs to the G-alpha family. G(i/o/t/z) subfamily. In terms of assembly, heterotrimeric G proteins are composed of 3 units; alpha, beta and gamma. The alpha subunit contains the guanine nucleotide binding site. GTP binding causes dissociation of the heterotrimer, liberating the individual subunits so that they can interact with downstream effector proteins. Forms a complex with CCDC88A/GIV and EGFR which leads to enhanced EGFR signaling and triggering of cell migration; ligand stimulation is required for recruitment of GNAI3 to the complex. Interacts (inactive GDP-bound form) with CCDC88A/GIV (via GBA motif); the interaction leads to activation of GNAI3. Interacts (inactive GDP-bound form) with CCDC88C/DAPLE (via GBA motif); the interaction leads to activation of GNAI3. Interacts (inactive GDP-bound form) with NUCB1 (via GBA motif) and NUCB2 (via GBA motif); the interaction leads to activation of GNAI3. Interacts (inactive GDP-bound form) with PLCD4 (via GBA motif); the interaction leads to activation of GNAI3. Interacts with INSR; the interaction is probably mediated by CCDC88A/GIV. Interacts with GPSM1. Interacts (GDP-bound form) with GPSM2 (via GoLoco domains). Does not interact with RGS2. Interacts with RGS8 and RGS10; this strongly enhances the intrinsic GTPase activity. Interacts with RGS16; this strongly enhances the intrinsic GTPase activity. Interacts with RGS12. Interacts (via active GTP- or inactive GDP-bound form) with RGS14. Interacts (via active GTP-bound form) with TRPC5 (via ANK repeats) in a homotetrameric ion channel; the interaction is direct and activates the channel activity. Post-translationally, (Microbial infection) Deamidated at Gln-204 by Photorhabdus asymbiotica toxin PAU_02230, blocking GTP hydrolysis of heterotrimeric GNAQ or GNA11 and G-alphai (GNAI1, GNAI2 or GNAI3) proteins, thereby activating RhoA.

It localises to the cytoplasm. The protein localises to the cell membrane. Its subcellular location is the cytoskeleton. It is found in the microtubule organizing center. The protein resides in the centrosome. Heterotrimeric guanine nucleotide-binding proteins (G proteins) function as transducers downstream of G protein-coupled receptors (GPCRs) in numerous signaling cascades. The alpha chain contains the guanine nucleotide binding site and alternates between an active, GTP-bound state and an inactive, GDP-bound state. Signaling by an activated GPCR promotes GDP release and GTP binding. The alpha subunit has a low GTPase activity that converts bound GTP to GDP, thereby terminating the signal. Both GDP release and GTP hydrolysis are modulated by numerous regulatory proteins. Signaling is mediated via effector proteins, such as adenylate cyclase. Inhibits adenylate cyclase activity, leading to decreased intracellular cAMP levels. Stimulates the activity of receptor-regulated K(+) channels. The active GTP-bound form prevents the association of RGS14 with centrosomes and is required for the translocation of RGS14 from the cytoplasm to the plasma membrane. May play a role in cell division. The active GTP-bound form activates the calcium permeant TRPC5 ion channels. In Homo sapiens (Human), this protein is Guanine nucleotide-binding protein G(i) subunit alpha-3 (GNAI3).